The following is a 419-amino-acid chain: UDP-N-acetylglucosamine 1-carboxyvinyltransferase (419 aa).

Phosphoenolpyruvate is bound at residue 22–23 (KN). Arg-93 contacts UDP-N-acetyl-alpha-D-glucosamine. Cys-117 functions as the Proton donor in the catalytic mechanism. At Cys-117 the chain carries 2-(S-cysteinyl)pyruvic acid O-phosphothioketal. Asp-307 and Ile-329 together coordinate UDP-N-acetyl-alpha-D-glucosamine.

It belongs to the EPSP synthase family. MurA subfamily.

Its subcellular location is the cytoplasm. The enzyme catalyses phosphoenolpyruvate + UDP-N-acetyl-alpha-D-glucosamine = UDP-N-acetyl-3-O-(1-carboxyvinyl)-alpha-D-glucosamine + phosphate. The protein operates within cell wall biogenesis; peptidoglycan biosynthesis. Its function is as follows. Cell wall formation. Adds enolpyruvyl to UDP-N-acetylglucosamine. This chain is UDP-N-acetylglucosamine 1-carboxyvinyltransferase, found in Shewanella denitrificans (strain OS217 / ATCC BAA-1090 / DSM 15013).